We begin with the raw amino-acid sequence, 347 residues long: uncharacterized protein (347 aa).

Disordered regions lie at residues 1-40 (MAQE…SNSM), 72-92 (SCED…IQGS), 133-158 (SDST…QLTL), 173-209 (ENQK…QVSH), and 306-347 (EDPR…PPDF). Over residues 15 to 25 (PGQNITETTTD) the composition is skewed to polar residues. Basic and acidic residues predominate over residues 143–154 (GDNKDKHPKEKT). The span at 179 to 194 (KDDDSVFPESAQEEDS) shows a compositional bias: acidic residues. The segment covering 195–209 (QLPSSSLPGMAQVSH) has biased composition (polar residues). Residues 306-318 (EDPREANERPREL) are compositionally biased toward basic and acidic residues. Residues 319-330 (ARKKRFSYRSKR) show a composition bias toward basic residues.

This is an uncharacterized protein from Bos taurus (Bovine).